Here is a 288-residue protein sequence, read N- to C-terminus: Mortality factor 4-like protein 2 (288 aa).

Polar residues predominate over residues 1 to 15; that stretch reads MSSRKQGSQPRGQQS. Positions 1–113 are disordered; the sequence is MSSRKQGSQP…RADPTVESEE (113 aa). Serine 71 carries the post-translational modification Phosphoserine. An MRG domain is found at 117-288; the sequence is NRMEVKVKIP…ASAEYHRKAL (172 aa).

In terms of assembly, component of the NuA4 histone acetyltransferase complex which contains the catalytic subunit KAT5/TIP60 and the subunits EP400, TRRAP/PAF400, BRD8/SMAP, EPC1, DMAP1/DNMAP1, RUVBL1/TIP49, RUVBL2, ING3, actin, ACTL6A/BAF53A, MORF4L1/MRG15, MORF4L2/MRGX, MRGBP, YEATS4/GAS41 and VPS72/YL1. The NuA4 complex interacts with MYC and the adenovirus E1A protein. MORF4L1 may also participate in the formation of NuA4 related complexes which lack the KAT5/TIP60 catalytic subunit, but which include the SWI/SNF related protein SRCAP. Component of the MSIN3A histone deacetylase complex, which includes SIN3A, HDAC2, ARID4B, MORF4L1, RBBP4/RbAp48, and RBBP7/RbAp46. Interacts with MRFAP1 and RB1. May also interact with one or more as yet undefined members of the TLE (transducin-like enhancer of split) family of transcriptional repressors.

The protein localises to the nucleus. Functionally, component of the NuA4 histone acetyltransferase complex which is involved in transcriptional activation of select genes principally by acetylation of nucleosomal histone H4 and H2A. This modification may both alter nucleosome - DNA interactions and promote interaction of the modified histones with other proteins which positively regulate transcription. This complex may be required for the activation of transcriptional programs associated with oncogene and proto-oncogene mediated growth induction, tumor suppressor mediated growth arrest and replicative senescence, apoptosis, and DNA repair. The NuA4 complex ATPase and helicase activities seem to be, at least in part, contributed by the association of RUVBL1 and RUVBL2 with EP400. NuA4 may also play a direct role in DNA repair when directly recruited to sites of DNA damage. Also a component of the MSIN3A complex which acts to repress transcription by deacetylation of nucleosomal histones. The chain is Mortality factor 4-like protein 2 (MORF4L2) from Macaca fascicularis (Crab-eating macaque).